The chain runs to 91 residues: Small ribosomal subunit protein bS20 (91 aa).

Residues 1-28 (MPNIKSAIKRTKTIEKRRAHRASQKSDL) are disordered. The segment covering 7–23 (AIKRTKTIEKRRAHRAS) has biased composition (basic residues).

This sequence belongs to the bacterial ribosomal protein bS20 family.

Its function is as follows. Binds directly to 16S ribosomal RNA. In Brevibacillus brevis (strain 47 / JCM 6285 / NBRC 100599), this protein is Small ribosomal subunit protein bS20.